A 1013-amino-acid chain; its full sequence is MDIS1-interacting receptor like kinase 1 (1013 aa).

A signal peptide spans 1–23; that stretch reads MKMKIIVLFLYYCYIGSTSSVLA. The Extracellular portion of the chain corresponds to 24 to 633; sequence SIDNVNELSV…SSHSSLHGKR (610 aa). Asn-61, Asn-82, Asn-101, Asn-137, Asn-146, Asn-151, and Asn-155 each carry an N-linked (GlcNAc...) asparagine glycan. LRR repeat units follow at residues 70–94, 95–117, 119–137, 139–163, 164–186, 187–213, 215–234, 235–259, 260–283, 284–307, 308–331, 333–355, 357–379, 381–403, 405–426, 427–451, 453–475, 477–498, 499–523, 525–547, 548–571, and 573–595; these read NGNV…ISQL, SSLV…SIPP, KSID…LFSN, SLGL…LGNL, VSLE…SFKN, LQKL…QLPS, ETAI…EFGN, INSL…LGKL, KSLE…IGSI, TTLK…ITKL, KNLQ…ISSL, QLQV…LGKN, PLQW…LCNK, NLTK…LSTC, SLVR…GFGK, LEKL…ISDS, SLSF…ILSI, NLQA…QFQD, CPSL…IASC, KLVS…ITTM, SALA…IGTS, and ALEL…GFLK. Asn-199 carries an N-linked (GlcNAc...) asparagine glycan. Asn-271 is a glycosylation site (N-linked (GlcNAc...) asparagine). Asn-341 carries N-linked (GlcNAc...) asparagine glycosylation. N-linked (GlcNAc...) asparagine glycosylation is found at Asn-381, Asn-389, and Asn-417. 3 N-linked (GlcNAc...) asparagine glycosylation sites follow: Asn-535, Asn-557, and Asn-578. Residues 634–654 form a helical membrane-spanning segment; sequence IVAGWLIGIASVLALGILTIV. At 655–1013 the chain is on the cytoplasmic side; sequence TRTLYKKWYS…FSTSPVNGLL (359 aa). At Thr-691 the chain carries Phosphothreonine. The Protein kinase domain maps to 699–983; it reads IKESNMIGMG…SMLGEAKPRR (285 aa). ATP contacts are provided by residues 705-713 and Lys-728; that span reads IGMGATGIV. Thr-710 bears the Phosphothreonine; by autocatalysis mark. Phosphothreonine; by autocatalysis occurs at positions 741 and 742. Tyr-777 and Tyr-818 each carry phosphotyrosine. Catalysis depends on Asp-831, which acts as the Proton acceptor. Thr-862 carries the phosphothreonine; by autocatalysis modification. The residue at position 864 (Ser-864) is a Phosphoserine; by autocatalysis. The residue at position 872 (Tyr-872) is a Phosphotyrosine. Tyr-879 carries the post-translational modification Phosphotyrosine; by autocatalysis. Thr-880 and Thr-992 each carry phosphothreonine; by autocatalysis. A disordered region spans residues 976 to 1013; it reads LGEAKPRRKSNSNEENTSRSLAEKHSSVFSTSPVNGLL. A compositionally biased stretch (polar residues) spans 1002 to 1013; it reads SVFSTSPVNGLL.

The protein belongs to the protein kinase superfamily. Ser/Thr protein kinase family. In terms of assembly, homodimer. Interacts with MDIS1 and LURE1.2. Post-translationally, autophosphorylation induced by the interaction with LURE1.2. In terms of tissue distribution, expressed in pollen tubes.

The protein localises to the cell membrane. The catalysed reaction is L-seryl-[protein] + ATP = O-phospho-L-seryl-[protein] + ADP + H(+). It carries out the reaction L-threonyl-[protein] + ATP = O-phospho-L-threonyl-[protein] + ADP + H(+). Functionally, involved in the regulation of procambium maintenance and polarity during vascular-tissue development. Involved in the pollen tube perception of the female signal. Phosphorylates MDSI1. This is MDIS1-interacting receptor like kinase 1 from Arabidopsis thaliana (Mouse-ear cress).